A 91-amino-acid polypeptide reads, in one-letter code: Small ribosomal subunit protein uS19 (91 aa).

Belongs to the universal ribosomal protein uS19 family.

Functionally, protein S19 forms a complex with S13 that binds strongly to the 16S ribosomal RNA. In Parasynechococcus marenigrum (strain WH8102), this protein is Small ribosomal subunit protein uS19.